A 114-amino-acid polypeptide reads, in one-letter code: Aspartate 1-decarboxylase (114 aa).

Catalysis depends on S25, which acts as the Schiff-base intermediate with substrate; via pyruvic acid. Position 25 is a pyruvic acid (Ser) (S25). T57 is a substrate binding site. Y58 serves as the catalytic Proton donor. Residue 71 to 73 (GAA) coordinates substrate.

Belongs to the PanD family. As to quaternary structure, heterooctamer of four alpha and four beta subunits. Pyruvate is required as a cofactor. Post-translationally, is synthesized initially as an inactive proenzyme, which is activated by self-cleavage at a specific serine bond to produce a beta-subunit with a hydroxyl group at its C-terminus and an alpha-subunit with a pyruvoyl group at its N-terminus.

It is found in the cytoplasm. It catalyses the reaction L-aspartate + H(+) = beta-alanine + CO2. The protein operates within cofactor biosynthesis; (R)-pantothenate biosynthesis; beta-alanine from L-aspartate: step 1/1. In terms of biological role, catalyzes the pyruvoyl-dependent decarboxylation of aspartate to produce beta-alanine. The polypeptide is Aspartate 1-decarboxylase (Campylobacter hominis (strain ATCC BAA-381 / DSM 21671 / CCUG 45161 / LMG 19568 / NCTC 13146 / CH001A)).